Consider the following 357-residue polypeptide: Glycerol-3-phosphate dehydrogenase [NAD(P)+] (357 aa).

Ser12, Trp13, His33, and Lys115 together coordinate NADPH. Lys115, Gly149, and Ser151 together coordinate sn-glycerol 3-phosphate. Residue Gly153 participates in NADPH binding. Sn-glycerol 3-phosphate contacts are provided by Lys204, Asp263, Arg274, and Asn275. Lys204 serves as the catalytic Proton acceptor. An NADPH-binding site is contributed by Arg274. Residues Leu307 and Glu309 each coordinate NADPH.

The protein belongs to the NAD-dependent glycerol-3-phosphate dehydrogenase family.

Its subcellular location is the cytoplasm. The enzyme catalyses sn-glycerol 3-phosphate + NAD(+) = dihydroxyacetone phosphate + NADH + H(+). The catalysed reaction is sn-glycerol 3-phosphate + NADP(+) = dihydroxyacetone phosphate + NADPH + H(+). It functions in the pathway membrane lipid metabolism; glycerophospholipid metabolism. Functionally, catalyzes the reduction of the glycolytic intermediate dihydroxyacetone phosphate (DHAP) to sn-glycerol 3-phosphate (G3P), the key precursor for phospholipid synthesis. In Treponema denticola (strain ATCC 35405 / DSM 14222 / CIP 103919 / JCM 8153 / KCTC 15104), this protein is Glycerol-3-phosphate dehydrogenase [NAD(P)+].